A 263-amino-acid chain; its full sequence is Indole-3-glycerol phosphate synthase (263 aa).

This sequence belongs to the TrpC family.

The catalysed reaction is 1-(2-carboxyphenylamino)-1-deoxy-D-ribulose 5-phosphate + H(+) = (1S,2R)-1-C-(indol-3-yl)glycerol 3-phosphate + CO2 + H2O. It participates in amino-acid biosynthesis; L-tryptophan biosynthesis; L-tryptophan from chorismate: step 4/5. The protein is Indole-3-glycerol phosphate synthase of Acidithiobacillus ferrooxidans (strain ATCC 23270 / DSM 14882 / CIP 104768 / NCIMB 8455) (Ferrobacillus ferrooxidans (strain ATCC 23270)).